The primary structure comprises 239 residues: Pyridoxine 5'-phosphate synthase (239 aa).

Asn7 provides a ligand contact to 3-amino-2-oxopropyl phosphate. 9-10 (DH) provides a ligand contact to 1-deoxy-D-xylulose 5-phosphate. Position 18 (Arg18) interacts with 3-amino-2-oxopropyl phosphate. His43 acts as the Proton acceptor in catalysis. The 1-deoxy-D-xylulose 5-phosphate site is built by Arg45 and His50. Catalysis depends on Glu70, which acts as the Proton acceptor. A 1-deoxy-D-xylulose 5-phosphate-binding site is contributed by Thr100. The Proton donor role is filled by His191. 3-amino-2-oxopropyl phosphate is bound by residues Gly192 and 213-214 (GH).

This sequence belongs to the PNP synthase family. As to quaternary structure, homooctamer; tetramer of dimers.

It is found in the cytoplasm. It catalyses the reaction 3-amino-2-oxopropyl phosphate + 1-deoxy-D-xylulose 5-phosphate = pyridoxine 5'-phosphate + phosphate + 2 H2O + H(+). The protein operates within cofactor biosynthesis; pyridoxine 5'-phosphate biosynthesis; pyridoxine 5'-phosphate from D-erythrose 4-phosphate: step 5/5. Its function is as follows. Catalyzes the complicated ring closure reaction between the two acyclic compounds 1-deoxy-D-xylulose-5-phosphate (DXP) and 3-amino-2-oxopropyl phosphate (1-amino-acetone-3-phosphate or AAP) to form pyridoxine 5'-phosphate (PNP) and inorganic phosphate. The sequence is that of Pyridoxine 5'-phosphate synthase from Geobacter metallireducens (strain ATCC 53774 / DSM 7210 / GS-15).